Here is a 380-residue protein sequence, read N- to C-terminus: MLSDIPRDALLRPLTRNEVVGMLVRLTVFGAATYYSIKWVVDALDPTQKQKSQAKKRAEQLMKQIGVEGVSLTEYEMNIATLLVDPRSIKVTWRDVAGLDEIISEMQDTVILPFQKRHLFSGSKLLQPPKGVLLYGPPGCGKTLIAKATAKASGCRFINLQASTLTDKWYGESQKLTAAVFSLAVKIQPCIIFLDEIDSFLRNRSSMDHEATAMMKAQFMSLWDGLDTGENSQVMVMGATNRPQDVDAAILRRMPTAFHVGLPNAAQREEILRLILSGENLSNAINLKEIASQSEGYSGSDLKELCRDAAMYRVRDYVRKQQMKQIAQQFQLDEEEEHVDSRQLRPVTQLDLLFGLDKMRESKQATATTDPANLREVPLD.

Topologically, residues 1–18 are mitochondrial intermembrane; the sequence is MLSDIPRDALLRPLTRNE. A helical membrane pass occupies residues 19 to 37; the sequence is VVGMLVRLTVFGAATYYSI. The Cytoplasmic segment spans residues 38-380; it reads KWVVDALDPT…PANLREVPLD (343 aa). Residue 136–143 participates in ATP binding; that stretch reads GPPGCGKT.

Belongs to the AAA ATPase family. MSP1 subfamily.

Its subcellular location is the mitochondrion outer membrane. The protein localises to the peroxisome membrane. The protein resides in the postsynaptic cell membrane. The catalysed reaction is [protein]-with a C-terminal TM segment(out) + ATP + H2O = [protein]-with a C-terminal TM segment(in) + ADP + phosphate + H(+). Outer mitochondrial translocase required to remove mislocalized tail-anchored transmembrane proteins on mitochondria. Specifically recognizes and binds tail-anchored transmembrane proteins: acts as a dislocase that mediates the ATP-dependent extraction of mistargeted tail-anchored transmembrane proteins from the mitochondrion outer membrane. Also plays a critical role in regulating the surface expression of AMPA receptors (AMPAR), thereby regulating synaptic plasticity and learning and memory. The sequence is that of Outer mitochondrial transmembrane helix translocase from Danio rerio (Zebrafish).